Here is a 506-residue protein sequence, read N- to C-terminus: Cysteine--tRNA ligase (506 aa).

Zn(2+) is bound at residue C34. Residues 36–46 (PTVYDFAHIGN) carry the 'HIGH' region motif. 3 residues coordinate Zn(2+): C230, H269, and E273. Positions 302-306 (KMSKS) match the 'KMSKS' region motif. K305 provides a ligand contact to ATP.

The protein belongs to the class-I aminoacyl-tRNA synthetase family. Monomer. Requires Zn(2+) as cofactor.

The protein resides in the cytoplasm. It carries out the reaction tRNA(Cys) + L-cysteine + ATP = L-cysteinyl-tRNA(Cys) + AMP + diphosphate. The protein is Cysteine--tRNA ligase of Brucella melitensis biotype 2 (strain ATCC 23457).